Here is a 147-residue protein sequence, read N- to C-terminus: Effector TSP1 (147 aa).

An N-terminal signal peptide occupies residues 1–19; it reads MQITKTLVATLFAASTAFA. 2 disulfides stabilise this stretch: cysteine 44–cysteine 51 and cysteine 67–cysteine 87.

As to quaternary structure, homodimer.

The protein localises to the secreted. In terms of biological role, stimulates salicylic acid signaling in host plant roots. The polypeptide is Effector TSP1 (Hypocrea virens (strain Gv29-8 / FGSC 10586) (Gliocladium virens)).